The following is a 293-amino-acid chain: Ethanolamine ammonia-lyase small subunit (293 aa).

2 residues coordinate adenosylcob(III)alamin: Val-207 and Glu-228.

The protein belongs to the EutC family. The basic unit is a heterodimer which dimerizes to form tetramers. The heterotetramers trimerize; 6 large subunits form a core ring with 6 small subunits projecting outwards. Adenosylcob(III)alamin is required as a cofactor.

It is found in the bacterial microcompartment. The enzyme catalyses ethanolamine = acetaldehyde + NH4(+). The protein operates within amine and polyamine degradation; ethanolamine degradation. Catalyzes the deamination of various vicinal amino-alcohols to oxo compounds. Allows this organism to utilize ethanolamine as the sole source of nitrogen and carbon in the presence of external vitamin B12. This chain is Ethanolamine ammonia-lyase small subunit, found in Listeria innocua serovar 6a (strain ATCC BAA-680 / CLIP 11262).